The primary structure comprises 363 residues: 3-isopropylmalate dehydrogenase (363 aa).

Glycine 78 to glutamate 91 is an NAD(+) binding site. Positions 99, 109, 138, and 227 each coordinate substrate. 3 residues coordinate Mg(2+): aspartate 227, aspartate 251, and aspartate 255. Residue glycine 285 to asparagine 297 participates in NAD(+) binding.

Belongs to the isocitrate and isopropylmalate dehydrogenases family. LeuB type 1 subfamily. In terms of assembly, homodimer. The cofactor is Mg(2+). Mn(2+) is required as a cofactor.

It localises to the cytoplasm. The catalysed reaction is (2R,3S)-3-isopropylmalate + NAD(+) = 4-methyl-2-oxopentanoate + CO2 + NADH. The protein operates within amino-acid biosynthesis; L-leucine biosynthesis; L-leucine from 3-methyl-2-oxobutanoate: step 3/4. In terms of biological role, catalyzes the oxidation of 3-carboxy-2-hydroxy-4-methylpentanoate (3-isopropylmalate) to 3-carboxy-4-methyl-2-oxopentanoate. The product decarboxylates to 4-methyl-2 oxopentanoate. In Buchnera aphidicola subsp. Rhopalosiphum padi, this protein is 3-isopropylmalate dehydrogenase (leuB).